Reading from the N-terminus, the 454-residue chain is Probable ECA polymerase (454 aa).

The next 11 helical transmembrane spans lie at 3–23 (LGQF…ILTL), 39–59 (FSML…MLVF), 61–81 (FGVA…ATAF), 119–139 (LALV…FLLF), 154–174 (GVAL…VYFL), 180–200 (AWFF…VIVG), 201–221 (GTRA…IVRG), 222–242 (WITL…MFWL), 340–360 (LVVM…GLII), 377–397 (YKAA…IVLA), and 409–429 (VFFC…YWLF).

This sequence belongs to the WzyE family. As to quaternary structure, probably part of a complex composed of WzxE, WzyE and WzzE.

It is found in the cell inner membrane. Its pathway is bacterial outer membrane biogenesis; enterobacterial common antigen biosynthesis. In terms of biological role, probably involved in the polymerization of enterobacterial common antigen (ECA) trisaccharide repeat units. The protein is Probable ECA polymerase of Yersinia pestis bv. Antiqua (strain Angola).